Consider the following 757-residue polypeptide: Polymeric immunoglobulin receptor (757 aa).

Residues 1–18 form the signal peptide; it reads MSRLFLACLLAIFPVVSM. One can recognise an Ig-like V-type 1; required for binding to polymeric IgA and IgM domain in the interval 19 to 126; the sequence is KSPIFGPEEV…RGLNFDVSLE (108 aa). At 19–632 the chain is on the extracellular side; it reads KSPIFGPEEV…TGYSGSSKAL (614 aa). 7 disulfides stabilise this stretch: cysteine 40–cysteine 110, cysteine 56–cysteine 64, cysteine 152–cysteine 220, cysteine 257–cysteine 324, cysteine 271–cysteine 279, cysteine 370–cysteine 440, and cysteine 384–cysteine 394. Asparagine 83 carries N-linked (GlcNAc...) asparagine glycosylation. Ig-like V-type domains lie at 145–237, 250–341, 353–457, and 461–560; these read GRTV…DLQV, RSSV…VQAW, ASPS…LKVV, and PSLK…VYVA. 2 N-linked (GlcNAc...) asparagine glycosylation sites follow: asparagine 420 and asparagine 468. 3 cysteine pairs are disulfide-bonded: cysteine 481–cysteine 543, cysteine 485–cysteine 519, and cysteine 495–cysteine 502. The disordered stretch occupies residues 607 to 627; that stretch reads KDAAGGPGAPADPGRPTGYSG. Residues 633-653 traverse the membrane as a helical segment; that stretch reads VSTLVPLALVLVAGVVAIGVV. Over 654–757 the chain is Cytoplasmic; the sequence is RARHRKNVDR…AATQNGPTEA (104 aa). Serine 665, serine 674, serine 681, and serine 727 each carry phosphoserine. A compositionally biased stretch (basic and acidic residues) spans 679 to 688; the sequence is ENSRDFEGRD. Residues 679–730 form a disordered region; sequence ENSRDFEGRDNMGASPEAQETSLGGKDEFATTTEDTVESKEPKKAKRSSKEE.

As to quaternary structure, interacts (mainly via CDR1-like domain) with dimeric IgA. Interacts (mainly via CDR2-like domain) with pentameric IgM. In terms of assembly, either free or part of the secretory IgA (sIgA) complex that consists of two, four or five IgA monomers, and two additional non-Ig polypeptides, namely the JCHAIN and the secretory component (the proteolytic product of PIGR). Free secretory component interacts with bacterial antigens toxA of C.difficile and eae of E.coli. In the absence of dimeric IgA, Ser-727 is phosphorylated which allows PIGR to function normally. Post-translationally, N-glycosylated. N-glycosylation is required for anchoring IgA molecules to mucus, but is not necessary for Ig binding. As to expression, found in mammary gland, jejunum, lung, kidney and small intestine.

Its subcellular location is the cell membrane. It is found in the secreted. In terms of biological role, mediates selective transcytosis of polymeric IgA and IgM across mucosal epithelial cells. Binds polymeric IgA and IgM at the basolateral surface of epithelial cells. The complex is then transported across the cell to be secreted at the apical surface. During this process, a cleavage occurs that separates the extracellular (known as the secretory component) from the transmembrane segment. Through its N-linked glycans ensures anchoring of secretory IgA (sIgA) molecules to mucus lining the epithelial surface to neutralize extracellular pathogens. On its own (free form) may act as a non-specific microbial scavenger to prevent pathogen interaction with epithelial cells. This is Polymeric immunoglobulin receptor (PIGR) from Bos taurus (Bovine).